Reading from the N-terminus, the 383-residue chain is S-adenosylmethionine synthase (383 aa).

His15 is an ATP binding site. Asp17 provides a ligand contact to Mg(2+). Glu43 is a K(+) binding site. L-methionine-binding residues include Glu56 and Gln99. The flexible loop stretch occupies residues 99 to 109; it reads QSPDINQGVDR. Residues 164-166, 230-231, Asp239, 245-246, Ala262, and Lys266 contribute to the ATP site; these read DAK, RF, and RK. Asp239 serves as a coordination point for L-methionine. Lys270 is an L-methionine binding site.

It belongs to the AdoMet synthase family. As to quaternary structure, homotetramer; dimer of dimers. It depends on Mg(2+) as a cofactor. Requires K(+) as cofactor.

It is found in the cytoplasm. The catalysed reaction is L-methionine + ATP + H2O = S-adenosyl-L-methionine + phosphate + diphosphate. Its pathway is amino-acid biosynthesis; S-adenosyl-L-methionine biosynthesis; S-adenosyl-L-methionine from L-methionine: step 1/1. Catalyzes the formation of S-adenosylmethionine (AdoMet) from methionine and ATP. The overall synthetic reaction is composed of two sequential steps, AdoMet formation and the subsequent tripolyphosphate hydrolysis which occurs prior to release of AdoMet from the enzyme. The chain is S-adenosylmethionine synthase from Shewanella baltica (strain OS223).